A 324-amino-acid polypeptide reads, in one-letter code: Beta-ketoacyl-[acyl-carrier-protein] synthase III (324 aa).

Residues cysteine 112 and histidine 251 contribute to the active site. An ACP-binding region spans residues 252–256 (QANLR). The active site involves asparagine 281.

It belongs to the thiolase-like superfamily. FabH family. As to quaternary structure, homodimer.

Its subcellular location is the cytoplasm. The enzyme catalyses malonyl-[ACP] + acetyl-CoA + H(+) = 3-oxobutanoyl-[ACP] + CO2 + CoA. It functions in the pathway lipid metabolism; fatty acid biosynthesis. Catalyzes the condensation reaction of fatty acid synthesis by the addition to an acyl acceptor of two carbons from malonyl-ACP. Catalyzes the first condensation reaction which initiates fatty acid synthesis and may therefore play a role in governing the total rate of fatty acid production. Possesses both acetoacetyl-ACP synthase and acetyl transacylase activities. Its substrate specificity determines the biosynthesis of branched-chain and/or straight-chain of fatty acids. The polypeptide is Beta-ketoacyl-[acyl-carrier-protein] synthase III (Clostridium perfringens (strain 13 / Type A)).